Consider the following 334-residue polypeptide: Methionyl-tRNA formyltransferase (334 aa).

(6S)-5,6,7,8-tetrahydrofolate is bound at residue 111–114; it reads SILP.

It belongs to the Fmt family.

It catalyses the reaction L-methionyl-tRNA(fMet) + (6R)-10-formyltetrahydrofolate = N-formyl-L-methionyl-tRNA(fMet) + (6S)-5,6,7,8-tetrahydrofolate + H(+). In terms of biological role, attaches a formyl group to the free amino group of methionyl-tRNA(fMet). The formyl group appears to play a dual role in the initiator identity of N-formylmethionyl-tRNA by promoting its recognition by IF2 and preventing the misappropriation of this tRNA by the elongation apparatus. The protein is Methionyl-tRNA formyltransferase of Gloeothece citriformis (strain PCC 7424) (Cyanothece sp. (strain PCC 7424)).